Reading from the N-terminus, the 663-residue chain is A-type ATP synthase subunit I (663 aa).

7 consecutive transmembrane segments (helical) span residues phenylalanine 376 to alanine 396, phenylalanine 412 to serine 432, leucine 468 to isoleucine 488, glycine 497 to serine 517, isoleucine 534 to isoleucine 554, alanine 568 to valine 588, and glycine 589 to phenylalanine 609.

Belongs to the V-ATPase 116 kDa subunit family. In terms of assembly, has multiple subunits with at least A(3), B(3), C, D, E, F, H, I and proteolipid K(x).

Its subcellular location is the cell membrane. Its function is as follows. Component of the A-type ATP synthase that produces ATP from ADP in the presence of a proton gradient across the membrane. The polypeptide is A-type ATP synthase subunit I (Thermococcus kodakarensis (strain ATCC BAA-918 / JCM 12380 / KOD1) (Pyrococcus kodakaraensis (strain KOD1))).